We begin with the raw amino-acid sequence, 497 residues long: Aldehyde dehydrogenase (497 aa).

Residue Gly242 to Gly247 participates in NAD(+) binding. Residue Glu265 is the Proton acceptor of the active site. Cys299 serves as the catalytic Nucleophile.

The protein belongs to the aldehyde dehydrogenase family.

The catalysed reaction is an aldehyde + NAD(+) + H2O = a carboxylate + NADH + 2 H(+). It functions in the pathway alcohol metabolism; ethanol degradation; acetate from ethanol: step 2/2. The polypeptide is Aldehyde dehydrogenase (aldA) (Aspergillus niger).